The primary structure comprises 128 residues: Small ribosomal subunit protein uS13 (128 aa).

Basic residues predominate over residues 95 to 118 (GLPVRGQRTHTNARTRKGPKKGLV). A disordered region spans residues 95–128 (GLPVRGQRTHTNARTRKGPKKGLVRKAAAPAPKA).

Belongs to the universal ribosomal protein uS13 family. In terms of assembly, part of the 30S ribosomal subunit. Forms a loose heterodimer with protein S19. Forms two bridges to the 50S subunit in the 70S ribosome.

Functionally, located at the top of the head of the 30S subunit, it contacts several helices of the 16S rRNA. In the 70S ribosome it contacts the 23S rRNA (bridge B1a) and protein L5 of the 50S subunit (bridge B1b), connecting the 2 subunits; these bridges are implicated in subunit movement. Contacts the tRNAs in the A and P-sites. This is Small ribosomal subunit protein uS13 from Anaeromyxobacter sp. (strain K).